The chain runs to 123 residues: Fluoride-specific ion channel FluC 1 (123 aa).

Transmembrane regions (helical) follow at residues 1–21, 34–54, 59–79, and 99–119; these read MVDL…RYTL, PLAT…LYGF, VIWL…STYI, and LTSI…ANFF. Na(+) contacts are provided by Gly-70 and Thr-73.

It belongs to the fluoride channel Fluc/FEX (TC 1.A.43) family.

The protein resides in the cell membrane. It catalyses the reaction fluoride(in) = fluoride(out). Its activity is regulated as follows. Na(+) is not transported, but it plays an essential structural role and its presence is essential for fluoride channel function. Its function is as follows. Fluoride-specific ion channel. Important for reducing fluoride concentration in the cell, thus reducing its toxicity. This chain is Fluoride-specific ion channel FluC 1, found in Carboxydothermus hydrogenoformans (strain ATCC BAA-161 / DSM 6008 / Z-2901).